We begin with the raw amino-acid sequence, 610 residues long: ESX-5 secretion system protein EccA5 (610 aa).

An ATP-binding site is contributed by 357–364; the sequence is GPPGTGKT.

The protein belongs to the CbxX/CfxQ family. Part of the ESX-5 / type VII secretion system (T7SS), which is composed of cytosolic and membrane components.

The protein resides in the cytoplasm. Functionally, part of the ESX-5 specialized secretion system, which is responsible for the secretion of EsxN and a number of PE_PGRS and PPE proteins. EccA5 exhibits ATPase activity and may provide energy for the export of ESX-5 substrates. The polypeptide is ESX-5 secretion system protein EccA5 (Mycobacterium marinum (strain ATCC BAA-535 / M)).